The sequence spans 140 residues: Small ribosomal subunit protein uS12 (140 aa).

The residue at position 102 (aspartate 102) is a 3-methylthioaspartic acid. The tract at residues 121–140 (ANRQQSRSKYGAKKPKAAKK) is disordered. A compositionally biased stretch (basic residues) spans 130–140 (YGAKKPKAAKK).

Belongs to the universal ribosomal protein uS12 family. In terms of assembly, part of the 30S ribosomal subunit. Contacts proteins S8 and S17. May interact with IF1 in the 30S initiation complex.

In terms of biological role, with S4 and S5 plays an important role in translational accuracy. Interacts with and stabilizes bases of the 16S rRNA that are involved in tRNA selection in the A site and with the mRNA backbone. Located at the interface of the 30S and 50S subunits, it traverses the body of the 30S subunit contacting proteins on the other side and probably holding the rRNA structure together. The combined cluster of proteins S8, S12 and S17 appears to hold together the shoulder and platform of the 30S subunit. The protein is Small ribosomal subunit protein uS12 of Alkaliphilus oremlandii (strain OhILAs) (Clostridium oremlandii (strain OhILAs)).